Consider the following 397-residue polypeptide: MDVLYSLSKTLKDARDKIVEGTLYSNVSDLIQQFNQMIITMNGNEFQTGGIGNLPTRNWSFDFGLLGTTLLNLDANYVETARNTIDYFVDFVDNVCMDEMVRESQRNGIAPQSESLRKLSGIKFKRINFDNSSEYIENWNLQNRRQRTGFTFHKPNIFPYSASFTLNRSQPAHDNLMGTMWLNAGSEIQVAGFDYSCAINAPANIQQFEHIVQLRRVLTTATITLLPDAERFSFPRVINSADGATTWYFNPVILRPNNVEVEFLLNGQIINTYQARFGTIVARNFDTIRLSFQLMRPPNMTPSVAALFPNAQPFEHHATVGLTLRIESAVCESVLADASETMLANVTSVRQEYAIPVGPVFPPGMNWTDLITNYSPSREDNLQRVFTVASIRSMLVK.

An interaction with the inner capsid protein VP2 region spans residues Asp-62–Leu-73. Residue His-153 participates in Zn(2+) binding. Residues Asn-266 and Asp-286 each coordinate Ca(2+).

This sequence belongs to the rotavirus VP6 family. Homotrimer. Interacts with the inner capsid protein VP2. Interacts with the outer capsid glycoprotein VP7. Interacts with the outer capsid protein VP5*. Post-translationally, the N-terminus is blocked. In terms of processing, sumoylated with SUMO1 and SUMO2. Sumoylation of viral proteins seems to have a positive role on viral replication.

It localises to the virion. Intermediate capsid protein that self assembles to form an icosahedral capsid with a T=13 symmetry, which consists of 230 trimers of VP6, with channels at each of its five-fold vertices. This capsid constitutes the middle concentric layer of the viral mature particle. The innermost VP2 capsid and the intermediate VP6 capsid remain intact following cell entry to protect the dsRNA from degradation and to prevent unfavorable antiviral responses in the host cell during all the replication cycle of the virus. Nascent transcripts are transcribed within the structural confines of this double-layered particle (DLP) and are extruded through the channels at the five-fold axes. VP6 is required for the transcription activity of the DLP. The sequence is that of Intermediate capsid protein VP6 from Homo sapiens (Human).